We begin with the raw amino-acid sequence, 204 residues long: MVVAKPTAAVSIEDLIKKHSDVDPFLVKKWERIFSLFFDRNASHQVDWGDFYLVVKKVRDIYGAESVQTGFAKKSLAALWEGLCSIADADKDQLISIDEWIGLLKKTDAKTEPKWFKDYQNFMFKLFDVSCDGVMDLAEYTDGMSTYGFDQSECDAAFHKFSVDKKGQYVPQMKPETWNTYFHQLFYSTNKSDVGNHLFGIIDF.

EF-hand domains lie at 25–61 (FLVK…VRDI), 75–110 (SLAA…TDAK), and 115–150 (WFKD…YGFD). Positions 39, 41, 43, 45, 50, 88, 90, 92, 99, 128, 130, 132, and 139 each coordinate Ca(2+).

This is Calexcitin-1 (cex-1) from Caenorhabditis elegans.